The following is a 336-amino-acid chain: tRNA(Ile)-lysidine synthase (336 aa).

Position 40 to 45 (40 to 45) interacts with ATP; that stretch reads SGGQDS.

Belongs to the tRNA(Ile)-lysidine synthase family.

Its subcellular location is the cytoplasm. The enzyme catalyses cytidine(34) in tRNA(Ile2) + L-lysine + ATP = lysidine(34) in tRNA(Ile2) + AMP + diphosphate + H(+). Its function is as follows. Ligates lysine onto the cytidine present at position 34 of the AUA codon-specific tRNA(Ile) that contains the anticodon CAU, in an ATP-dependent manner. Cytidine is converted to lysidine, thus changing the amino acid specificity of the tRNA from methionine to isoleucine. The sequence is that of tRNA(Ile)-lysidine synthase from Prochlorococcus marinus (strain SARG / CCMP1375 / SS120).